The sequence spans 144 residues: Putative sugar phosphate isomerase RT0290 (144 aa).

His12 provides a ligand contact to substrate. His101 acts as the Proton donor in catalysis. Arg135 serves as a coordination point for substrate.

It belongs to the LacAB/RpiB family.

This chain is Putative sugar phosphate isomerase RT0290, found in Rickettsia typhi (strain ATCC VR-144 / Wilmington).